The sequence spans 177 residues: Adenine phosphoribosyltransferase (177 aa).

It belongs to the purine/pyrimidine phosphoribosyltransferase family. Homodimer.

Its subcellular location is the cytoplasm. The catalysed reaction is AMP + diphosphate = 5-phospho-alpha-D-ribose 1-diphosphate + adenine. The protein operates within purine metabolism; AMP biosynthesis via salvage pathway; AMP from adenine: step 1/1. Functionally, catalyzes a salvage reaction resulting in the formation of AMP, that is energically less costly than de novo synthesis. The polypeptide is Adenine phosphoribosyltransferase (Acidothermus cellulolyticus (strain ATCC 43068 / DSM 8971 / 11B)).